The chain runs to 68 residues: Large ribosomal subunit protein uL29 (68 aa).

It belongs to the universal ribosomal protein uL29 family.

The chain is Large ribosomal subunit protein uL29 from Streptococcus suis (strain 98HAH33).